The primary structure comprises 647 residues: MALAMLRDWCRWMGANAERSLLILGIPDDCKEHEFQEAVRAALSPLGRYRVLTKHFRKELGAKAALVEFAEYLNRSLIPHQIPGNGGPWKVIFLPQVPVIEFQDMPSFPAQPQGQAVAKAAGEGGGAGEAGGVGEVGAAGEAGGTGEAGATGEAGAAGEAGGAGEAGGVGEAGAAGEAGGAGEAGAAGEGGAAGEAGGAGEAGGVGEAGAAGEAGGAGEAGGVGEAGAAGEAGGAGEAGAAGEAGGAGEGRAAGEAGAAGEAGAVGEAGAAGEAGAVGEAGAAGEAGAVGEAGGTNVTKAWVQPWRCTLQPVLENRAYRELRPFSRREQPGCEEESFESWVEHAKDMLQLWCHASEREKKRWLLESLGGPALEVVSGLLEEDTNLSALDCLAALGQVFRNQDTRMTSRLKFLTCTQGPQEGLFAFVVRLEGLLQRAVEKGAVCPALANYLRLQQVLSWARPSEALQDTLRGMQLEKRPPGFLGLLRLIREMEAWAAFPARSQQGVAWAAAPVESEDPAAAQASPAQGNASEAGPGAEDAAEAASATKEAARGAPAAGEGESAPAGPEGLGQARPIEVPWGSSPARMSSAVWVFPRGLSWGPEGLIQVRGQEARKPPLEGLQTILEEPENEDEDGAGDEGQPKSSQGK.

4 disordered regions span residues 111-199 (QPQG…AGGA), 227-254 (GAAGEAGGAGEAGAAGEAGGAGEGRAAG), 508-580 (AAAP…VPWG), and 608-647 (RGQEARKPPLEGLQTILEEPENEDEDGAGDEGQPKSSQGK). Gly residues-rich tracts occupy residues 122–149 (GEGGGAGEAGGVGEVGAAGEAGGTGEAG), 158–199 (GEAG…AGGA), and 227–251 (GAAGEAGGAGEAGAAGEAGGAGEGR). Residues 517-570 (PAAAQASPAQGNASEAGPGAEDAAEAASATKEAARGAPAAGEGESAPAGPEGLG) show a composition bias toward low complexity. A compositionally biased stretch (acidic residues) spans 625 to 636 (EEPENEDEDGAG).

The protein is Paraneoplastic antigen Ma6E of Homo sapiens (Human).